The following is a 95-amino-acid chain: Aspartyl/glutamyl-tRNA(Asn/Gln) amidotransferase subunit C (95 aa).

The protein belongs to the GatC family. In terms of assembly, heterotrimer of A, B and C subunits.

The catalysed reaction is L-glutamyl-tRNA(Gln) + L-glutamine + ATP + H2O = L-glutaminyl-tRNA(Gln) + L-glutamate + ADP + phosphate + H(+). It carries out the reaction L-aspartyl-tRNA(Asn) + L-glutamine + ATP + H2O = L-asparaginyl-tRNA(Asn) + L-glutamate + ADP + phosphate + 2 H(+). Allows the formation of correctly charged Asn-tRNA(Asn) or Gln-tRNA(Gln) through the transamidation of misacylated Asp-tRNA(Asn) or Glu-tRNA(Gln) in organisms which lack either or both of asparaginyl-tRNA or glutaminyl-tRNA synthetases. The reaction takes place in the presence of glutamine and ATP through an activated phospho-Asp-tRNA(Asn) or phospho-Glu-tRNA(Gln). The sequence is that of Aspartyl/glutamyl-tRNA(Asn/Gln) amidotransferase subunit C from Dechloromonas aromatica (strain RCB).